Here is a 507-residue protein sequence, read N- to C-terminus: Maturase K (507 aa).

This sequence belongs to the intron maturase 2 family. MatK subfamily.

Its subcellular location is the plastid. The protein localises to the chloroplast. Functionally, usually encoded in the trnK tRNA gene intron. Probably assists in splicing its own and other chloroplast group II introns. The sequence is that of Maturase K from Kalmia buxifolia (Sand myrtle).